The chain runs to 156 residues: ATP synthase subunit b (156 aa).

A helical membrane pass occupies residues 5-27 (ITLIGQMITFAIFVGFTMKFVWP).

It belongs to the ATPase B chain family. F-type ATPases have 2 components, F(1) - the catalytic core - and F(0) - the membrane proton channel. F(1) has five subunits: alpha(3), beta(3), gamma(1), delta(1), epsilon(1). F(0) has three main subunits: a(1), b(2) and c(10-14). The alpha and beta chains form an alternating ring which encloses part of the gamma chain. F(1) is attached to F(0) by a central stalk formed by the gamma and epsilon chains, while a peripheral stalk is formed by the delta and b chains.

It is found in the cell inner membrane. Functionally, f(1)F(0) ATP synthase produces ATP from ADP in the presence of a proton or sodium gradient. F-type ATPases consist of two structural domains, F(1) containing the extramembraneous catalytic core and F(0) containing the membrane proton channel, linked together by a central stalk and a peripheral stalk. During catalysis, ATP synthesis in the catalytic domain of F(1) is coupled via a rotary mechanism of the central stalk subunits to proton translocation. In terms of biological role, component of the F(0) channel, it forms part of the peripheral stalk, linking F(1) to F(0). The sequence is that of ATP synthase subunit b from Francisella tularensis subsp. tularensis (strain WY96-3418).